Here is a 410-residue protein sequence, read N- to C-terminus: Cysteine desulfurase (410 aa).

Lysine 227 bears the N6-(pyridoxal phosphate)lysine mark. Residue cysteine 365 is the Cysteine persulfide intermediate of the active site.

Belongs to the class-V pyridoxal-phosphate-dependent aminotransferase family. Csd subfamily. As to quaternary structure, homodimer. Interacts with SufE and the SufBCD complex composed of SufB, SufC and SufD. The interaction with SufE is required to mediate the direct transfer of the sulfur atom from the S-sulfanylcysteine. Pyridoxal 5'-phosphate serves as cofactor.

The protein resides in the cytoplasm. It carries out the reaction (sulfur carrier)-H + L-cysteine = (sulfur carrier)-SH + L-alanine. The catalysed reaction is L-selenocysteine + AH2 = hydrogenselenide + L-alanine + A + H(+). It participates in cofactor biosynthesis; iron-sulfur cluster biosynthesis. In terms of biological role, cysteine desulfurases mobilize the sulfur from L-cysteine to yield L-alanine, an essential step in sulfur metabolism for biosynthesis of a variety of sulfur-containing biomolecules. Component of the suf operon, which is activated and required under specific conditions such as oxidative stress and iron limitation. Acts as a potent selenocysteine lyase in vitro, that mobilizes selenium from L-selenocysteine. Selenocysteine lyase activity is however unsure in vivo. The sequence is that of Cysteine desulfurase from Wigglesworthia glossinidia brevipalpis.